Consider the following 57-residue polypeptide: Large ribosomal subunit protein bL32c (57 aa).

It belongs to the bacterial ribosomal protein bL32 family.

It is found in the plastid. It localises to the chloroplast. The protein is Large ribosomal subunit protein bL32c of Vitis vinifera (Grape).